Reading from the N-terminus, the 207-residue chain is Small ribosomal subunit protein uS2 (207 aa).

This sequence belongs to the universal ribosomal protein uS2 family.

The chain is Small ribosomal subunit protein uS2 from Pyrobaculum islandicum (strain DSM 4184 / JCM 9189 / GEO3).